Here is a 903-residue protein sequence, read N- to C-terminus: HTH-type transcriptional regulator MalT (903 aa).

Residue cysteine 39–threonine 46 coordinates ATP. Residues glutamate 832–leucine 897 form the HTH luxR-type domain. The H-T-H motif DNA-binding region spans asparagine 856–arginine 875.

Belongs to the MalT family. In terms of assembly, monomer in solution. Oligomerizes to an active state in the presence of the positive effectors ATP and maltotriose.

Its activity is regulated as follows. Activated by ATP and maltotriose, which are both required for DNA binding. In terms of biological role, positively regulates the transcription of the maltose regulon whose gene products are responsible for uptake and catabolism of malto-oligosaccharides. Specifically binds to the promoter region of its target genes, recognizing a short DNA motif called the MalT box. This is HTH-type transcriptional regulator MalT from Yersinia pseudotuberculosis serotype O:1b (strain IP 31758).